The following is a 236-amino-acid chain: Ureidoacrylate amidohydrolase RutB (236 aa).

Aspartate 24 acts as the Proton acceptor in catalysis. Lysine 133 is a catalytic residue. Residue cysteine 166 is the Nucleophile of the active site.

The protein belongs to the isochorismatase family. RutB subfamily.

It carries out the reaction (Z)-3-ureidoacrylate + H2O + H(+) = (Z)-3-aminoacrylate + NH4(+) + CO2. The enzyme catalyses (Z)-3-ureidoacrylate + H2O = (Z)-3-aminoacrylate + carbamate + H(+). The catalysed reaction is (Z)-2-methylureidoacrylate + H2O + H(+) = (Z)-2-methylaminoacrylate + NH4(+) + CO2. Its function is as follows. Hydrolyzes ureidoacrylate to form aminoacrylate and carbamate. The carbamate hydrolyzes spontaneously, thereby releasing one of the nitrogen atoms of the pyrimidine ring as ammonia and one of its carbon atoms as CO2. The sequence is that of Ureidoacrylate amidohydrolase RutB from Klebsiella pneumoniae subsp. pneumoniae (strain ATCC 700721 / MGH 78578).